The following is a 359-amino-acid chain: DNA replication and repair protein RecF (359 aa).

30–37 is a binding site for ATP; it reads GQNAQGKT.

Belongs to the RecF family.

It is found in the cytoplasm. The RecF protein is involved in DNA metabolism; it is required for DNA replication and normal SOS inducibility. RecF binds preferentially to single-stranded, linear DNA. It also seems to bind ATP. The polypeptide is DNA replication and repair protein RecF (Lactococcus lactis subsp. cremoris (strain SK11)).